The chain runs to 156 residues: Small ribosomal subunit protein uS7 (156 aa).

Belongs to the universal ribosomal protein uS7 family. As to quaternary structure, part of the 30S ribosomal subunit. Contacts proteins S9 and S11.

In terms of biological role, one of the primary rRNA binding proteins, it binds directly to 16S rRNA where it nucleates assembly of the head domain of the 30S subunit. Is located at the subunit interface close to the decoding center, probably blocks exit of the E-site tRNA. The chain is Small ribosomal subunit protein uS7 from Vibrio campbellii (strain ATCC BAA-1116).